The following is a 210-amino-acid chain: Guanylate kinase (210 aa).

The region spanning 5–184 is the Guanylate kinase-like domain; the sequence is GLLIVFSGPS…AAERVKHIIE (180 aa). Residue 12–19 coordinates ATP; it reads GPSGVGKG.

Belongs to the guanylate kinase family.

The protein resides in the cytoplasm. The catalysed reaction is GMP + ATP = GDP + ADP. Essential for recycling GMP and indirectly, cGMP. The polypeptide is Guanylate kinase (Streptococcus mutans serotype c (strain ATCC 700610 / UA159)).